Reading from the N-terminus, the 163-residue chain is Large ribosomal subunit protein uL11 (163 aa).

It belongs to the universal ribosomal protein uL11 family. As to quaternary structure, part of the ribosomal stalk of the 50S ribosomal subunit. Interacts with L10 and the large rRNA to form the base of the stalk. L10 forms an elongated spine to which L12 dimers bind in a sequential fashion forming a multimeric L10(L12)X complex.

Its function is as follows. Forms part of the ribosomal stalk which helps the ribosome interact with GTP-bound translation factors. This is Large ribosomal subunit protein uL11 from Thermococcus onnurineus (strain NA1).